The chain runs to 644 residues: Exoribonuclease 2 (644 aa).

The RNB domain occupies 189–516 (RQDLTALNFV…NHRLLKAAIK (328 aa)). Positions 561-643 (DTRFAAEIID…ETRSIIARPV (83 aa)) constitute an S1 motif domain.

This sequence belongs to the RNR ribonuclease family. RNase II subfamily.

It is found in the cytoplasm. The enzyme catalyses Exonucleolytic cleavage in the 3'- to 5'-direction to yield nucleoside 5'-phosphates.. In terms of biological role, involved in mRNA degradation. Hydrolyzes single-stranded polyribonucleotides processively in the 3' to 5' direction. This Escherichia fergusonii (strain ATCC 35469 / DSM 13698 / CCUG 18766 / IAM 14443 / JCM 21226 / LMG 7866 / NBRC 102419 / NCTC 12128 / CDC 0568-73) protein is Exoribonuclease 2.